A 574-amino-acid chain; its full sequence is G protein-coupled receptor kinase 4 (574 aa).

Met-1 carries the N-acetylmethionine modification. The N-terminal stretch occupies residues Met-1–Leu-153. The RGS domain maps to Asp-51–Leu-171. The Protein kinase domain occupies Phe-186–Phe-448. ATP-binding positions include Leu-192–Val-200 and Lys-215. The active-site Proton acceptor is the Asp-311. The AGC-kinase C-terminal domain occupies Lys-449 to Glu-514. Ser-484 carries the post-translational modification Phosphoserine.

This sequence belongs to the protein kinase superfamily. AGC Ser/Thr protein kinase family. GPRK subfamily. Interacts with DRD3. Palmitoylated.

It is found in the cytoplasm. The protein localises to the cell cortex. The catalysed reaction is [G-protein-coupled receptor] + ATP = [G-protein-coupled receptor]-phosphate + ADP + H(+). With respect to regulation, inhibited by heparin. Functionally, specifically phosphorylates the activated forms of G protein-coupled receptors. This chain is G protein-coupled receptor kinase 4 (Grk4), found in Mus musculus (Mouse).